A 944-amino-acid polypeptide reads, in one-letter code: Serine/threonine-protein kinase PLK4 (944 aa).

The 254-residue stretch at 12–265 folds into the Protein kinase domain; the sequence is FKVLNLLGKG…LSSVLDHAFM (254 aa). ATP contacts are provided by residues 18–26 and lysine 41; that span reads LGKGSFACV. The active-site Proton acceptor is aspartate 136. Disordered stretches follow at residues 327–396, 432–463, and 530–561; these read KDKH…YSER, RSLE…RSND, and LGIK…QQAF. A compositionally biased stretch (polar residues) spans 378-394; the sequence is RSGTSQSQTYAKPSSYS. The span at 432–447 shows a compositional bias: basic and acidic residues; sequence RSLERHTSPPVKEKTP. Residues 548–561 are compositionally biased toward polar residues; the sequence is FGEQSKSRVPQQAF. The Cryptic POLO box 1 (CPB1) domain occupies 565–678; that stretch reads TLRSIISPLN…AKFIKLVRSK (114 aa). Residues 679–791 form the Cryptic POLO box 2 (CPB2) domain; the sequence is TPKVTYYTRY…GRRPALAESP (113 aa). The segment at 786–809 is disordered; sequence ALAESPKTQPTPSVDSARERKEEQ. The 79-residue stretch at 862 to 940 folds into the POLO box domain; the sequence is QVLKSVFVEN…LSSILMLFAS (79 aa).

It belongs to the protein kinase superfamily. Ser/Thr protein kinase family. CDC5/Polo subfamily. Homodimer. In terms of processing, ubiquitinated; leading to its degradation by the proteasome.

It is found in the cytoplasm. The protein localises to the cytoskeleton. The protein resides in the microtubule organizing center. Its subcellular location is the centrosome. It localises to the centriole. It catalyses the reaction L-seryl-[protein] + ATP = O-phospho-L-seryl-[protein] + ADP + H(+). The enzyme catalyses L-threonyl-[protein] + ATP = O-phospho-L-threonyl-[protein] + ADP + H(+). In terms of biological role, serine/threonine-protein kinase that plays a central role in centriole duplication. Able to trigger procentriole formation on the surface of the parental centriole cylinder, leading to the recruitment of centriole biogenesis proteins such as sass6, cpap, ccp110, cep135 and gamma-tubulin. When overexpressed, it is able to induce centrosome amplification through the simultaneous generation of multiple procentrioles adjoining each parental centriole during S phase. Its central role in centriole replication suggests a possible role in tumorigenesis, centrosome aberrations being frequently observed in tumors. Also involved in deuterosome-mediated centriole amplification in multiciliated that can generate more than 100 centrioles. The polypeptide is Serine/threonine-protein kinase PLK4 (Xenopus laevis (African clawed frog)).